The following is a 190-amino-acid chain: Isopentenyl-diphosphate Delta-isomerase (190 aa).

Positions 27 and 34 each coordinate Mn(2+). The 140-residue stretch at 32–171 (PLHFAFSSYI…PFVFSPWMVD (140 aa)) folds into the Nudix hydrolase domain. Cys69 is a catalytic residue. Cys69 contributes to the Mg(2+) binding site. A Mn(2+)-binding site is contributed by His71. Glu89 is a binding site for Mg(2+). Mn(2+)-binding residues include Glu119 and Glu121. Glu121 is an active-site residue.

It belongs to the IPP isomerase type 1 family. It depends on Mg(2+) as a cofactor. Mn(2+) is required as a cofactor.

The protein resides in the cytoplasm. It catalyses the reaction isopentenyl diphosphate = dimethylallyl diphosphate. Its pathway is isoprenoid biosynthesis; dimethylallyl diphosphate biosynthesis; dimethylallyl diphosphate from isopentenyl diphosphate: step 1/1. Its function is as follows. Catalyzes the 1,3-allylic rearrangement of the homoallylic substrate isopentenyl (IPP) to its highly electrophilic allylic isomer, dimethylallyl diphosphate (DMAPP). The protein is Isopentenyl-diphosphate Delta-isomerase of Corynebacterium efficiens (strain DSM 44549 / YS-314 / AJ 12310 / JCM 11189 / NBRC 100395).